Here is a 396-residue protein sequence, read N- to C-terminus: S-adenosylmethionine synthase (396 aa).

Residue His16 participates in ATP binding. Asp18 contributes to the Mg(2+) binding site. A K(+)-binding site is contributed by Glu44. The L-methionine site is built by Glu57 and Gln100. Positions 100 to 110 (QSPDIAQGVDD) are flexible loop. ATP-binding positions include 174 to 176 (DAK), 241 to 242 (RF), Asp250, 256 to 257 (RK), Ala273, and Lys277. An L-methionine-binding site is contributed by Asp250. L-methionine is bound at residue Lys281.

This sequence belongs to the AdoMet synthase family. In terms of assembly, homotetramer; dimer of dimers. The cofactor is Mg(2+). K(+) is required as a cofactor.

Its subcellular location is the cytoplasm. The enzyme catalyses L-methionine + ATP + H2O = S-adenosyl-L-methionine + phosphate + diphosphate. The protein operates within amino-acid biosynthesis; S-adenosyl-L-methionine biosynthesis; S-adenosyl-L-methionine from L-methionine: step 1/1. Catalyzes the formation of S-adenosylmethionine (AdoMet) from methionine and ATP. The overall synthetic reaction is composed of two sequential steps, AdoMet formation and the subsequent tripolyphosphate hydrolysis which occurs prior to release of AdoMet from the enzyme. This Pediococcus pentosaceus (strain ATCC 25745 / CCUG 21536 / LMG 10740 / 183-1w) protein is S-adenosylmethionine synthase.